A 179-amino-acid chain; its full sequence is ATP synthase subunit delta (179 aa).

Belongs to the ATPase delta chain family. In terms of assembly, F-type ATPases have 2 components, F(1) - the catalytic core - and F(0) - the membrane proton channel. F(1) has five subunits: alpha(3), beta(3), gamma(1), delta(1), epsilon(1). F(0) has three main subunits: a(1), b(2) and c(10-14). The alpha and beta chains form an alternating ring which encloses part of the gamma chain. F(1) is attached to F(0) by a central stalk formed by the gamma and epsilon chains, while a peripheral stalk is formed by the delta and b chains.

Its subcellular location is the cell membrane. In terms of biological role, f(1)F(0) ATP synthase produces ATP from ADP in the presence of a proton or sodium gradient. F-type ATPases consist of two structural domains, F(1) containing the extramembraneous catalytic core and F(0) containing the membrane proton channel, linked together by a central stalk and a peripheral stalk. During catalysis, ATP synthesis in the catalytic domain of F(1) is coupled via a rotary mechanism of the central stalk subunits to proton translocation. This protein is part of the stalk that links CF(0) to CF(1). It either transmits conformational changes from CF(0) to CF(1) or is implicated in proton conduction. This is ATP synthase subunit delta from Metamycoplasma arthritidis (strain 158L3-1) (Mycoplasma arthritidis).